A 392-amino-acid chain; its full sequence is Na(+)/H(+) antiporter NhaA (392 aa).

Transmembrane regions (helical) follow at residues 17–37, 59–79, 95–115, 125–145, 154–174, 179–199, 213–233, 254–274, 290–310, 328–348, and 363–383; these read ILLIVAAIIALIMANTPLSAL, LILWVNDALMAIFFLVVGLEV, IFPAIAAVGGMLAPALIYLFF, GWAIPAATDIAFALGVMALLG, VFLLALAIIDDLGVIVIIALF, VALVPLLLAALITIMLFILNW, FILWVCILKSGIHATIAGVIV, VLHPWVAYLILPLFAFSNAGV, VGIALGLFLGKPIGIFLFSWV, IFAVSVLCGIGFTMSIFIAGL, and LGILVGSTMAAVVGYLLLNSV.

Belongs to the NhaA Na(+)/H(+) (TC 2.A.33) antiporter family.

Its subcellular location is the cell inner membrane. The catalysed reaction is Na(+)(in) + 2 H(+)(out) = Na(+)(out) + 2 H(+)(in). Na(+)/H(+) antiporter that extrudes sodium in exchange for external protons. This chain is Na(+)/H(+) antiporter NhaA, found in Proteus mirabilis (strain HI4320).